A 143-amino-acid polypeptide reads, in one-letter code: Meiotically up-regulated gene 128 protein (143 aa).

Functionally, has a role in meiosis. This chain is Meiotically up-regulated gene 128 protein (mug128), found in Schizosaccharomyces pombe (strain 972 / ATCC 24843) (Fission yeast).